The following is a 339-amino-acid chain: MTVRVAINGFGRIGRNVVRALYESGRRAEITVVAINELADAAGMAHLLKYDTSHGRFAWEVRQERDQLFVGDDAIRVLHERSLQSLPWRELGVDVVLDCTGVYGSREHGEAHIAAGAKKVLFSHPGSNDLDTTVVYGVNQDQLRAEHRIVSNASCTTNCIIPVIKLLDDAYGIESGTVTTIHSAMHDQQVIDAYHPDLRRTRAASQSIIPVDTKLAAGITRFFPQFNDRFEAIAVRVPTINVTAIDLSVTVKKPVKANEVNLLLQKAAQGAFHGIVDYAELPLVSVDFNHDPHSAIVDGTQTRVSGAHLIKTLVWCDNEWGFANRMLDTTLAMATVAFR.

NAD(+) contacts are provided by residues 12-13 and Arg-81; that span reads RI. Substrate contacts are provided by residues 154–156, Arg-200, 213–214, and Arg-236; these read SCT and TK. Cys-155 serves as the catalytic Nucleophile. Asn-318 serves as a coordination point for NAD(+).

Belongs to the glyceraldehyde-3-phosphate dehydrogenase family. Epd subfamily. In terms of assembly, homotetramer.

It localises to the cytoplasm. It carries out the reaction D-erythrose 4-phosphate + NAD(+) + H2O = 4-phospho-D-erythronate + NADH + 2 H(+). It functions in the pathway cofactor biosynthesis; pyridoxine 5'-phosphate biosynthesis; pyridoxine 5'-phosphate from D-erythrose 4-phosphate: step 1/5. Catalyzes the NAD-dependent conversion of D-erythrose 4-phosphate to 4-phosphoerythronate. This chain is D-erythrose-4-phosphate dehydrogenase, found in Escherichia coli O45:K1 (strain S88 / ExPEC).